Here is a 116-residue protein sequence, read N- to C-terminus: uncharacterized protein (116 aa).

The disordered stretch occupies residues 64–116 (RRFYSGTVNRNARSAGAASRSTSSVKRPLESKKRNARPETEKWCASYSAGNRR). The segment covering 73 to 87 (RNARSAGAASRSTSS) has biased composition (low complexity). Over residues 90 to 105 (RPLESKKRNARPETEK) the composition is skewed to basic and acidic residues.

This is an uncharacterized protein from Saccharomyces cerevisiae (strain ATCC 204508 / S288c) (Baker's yeast).